We begin with the raw amino-acid sequence, 203 residues long: Small ribosomal subunit protein uS4 (203 aa).

An S4 RNA-binding domain is found at 93 to 156; that stretch reads RRLDNVVYRL…LKVPAILEAV (64 aa).

Belongs to the universal ribosomal protein uS4 family. In terms of assembly, part of the 30S ribosomal subunit. Contacts protein S5. The interaction surface between S4 and S5 is involved in control of translational fidelity.

Its function is as follows. One of the primary rRNA binding proteins, it binds directly to 16S rRNA where it nucleates assembly of the body of the 30S subunit. Functionally, with S5 and S12 plays an important role in translational accuracy. The chain is Small ribosomal subunit protein uS4 from Streptococcus gordonii (strain Challis / ATCC 35105 / BCRC 15272 / CH1 / DL1 / V288).